The chain runs to 201 residues: Syndecan-2 (201 aa).

The first 18 residues, 1 to 18 (MQRAWILLTLGLMACVSA), serve as a signal peptide directing secretion. The Extracellular portion of the chain corresponds to 19–144 (ETRAELTSDK…HSDNLFKRTE (126 aa)). O-linked (Xyl...) (glycosaminoglycan) serine glycosylation is found at S41, S55, and S57. Disordered stretches follow at residues 42–69 (GLYPIDDDDYSSASGSGAYEDKGSPDLT) and 88–129 (TMTL…KSTD). The segment covering 90 to 102 (TLKTQSITPTQTE) has biased composition (polar residues). A compositionally biased stretch (basic and acidic residues) spans 106 to 123 (ETDKKEFEISEAEEKQDP). Phosphoserine is present on S115. Residues 145 to 169 (VLAAVIAGGVIGFLFAIFLILLLVY) traverse the membrane as a helical segment. Over 170–201 (RMRKKDEGSYDLGERKPSSAAYQKAPTKEFYA) the chain is Cytoplasmic. The interval 178 to 201 (SYDLGERKPSSAAYQKAPTKEFYA) is disordered. Residue S187 is modified to Phosphoserine.

The protein belongs to the syndecan proteoglycan family. As to quaternary structure, interacts (via cytoplasmic domain) with SARM1. Forms a complex with SDCBP and PDCD6IP. O-glycosylated; contains both heparan sulfate and chondroitin sulfate.

It localises to the membrane. In terms of biological role, cell surface proteoglycan which regulates dendritic arbor morphogenesis. The polypeptide is Syndecan-2 (Sdc2) (Rattus norvegicus (Rat)).